Reading from the N-terminus, the 900-residue chain is Sterol regulatory element-binding protein 1 (900 aa).

Over residues 1 to 16 (MQSSIPSVSVSVASPA) the composition is skewed to low complexity. Disordered stretches follow at residues 1–49 (MQSS…TKAS) and 206–263 (TTCK…PKKT). Residues 1–440 (MQSSIPSVSV…FALPPFLMSP (440 aa)) form a nuclear form of sre1; complements deletions of sre1 or scp1 region. Topologically, residues 1-442 (MQSSIPSVSV…LPPFLMSPFT (442 aa)) are cytoplasmic. A compositionally biased stretch (polar residues) spans 21 to 32 (TKASPDSKSPNS). Residues 35-49 (AIPSSSPLASSTKAS) show a composition bias toward low complexity. A bHLH domain is found at 260 to 332 (PKKTAHNMIE…AKATEYIRHL (73 aa)). A helical transmembrane segment spans residues 443–463 (GTVLFNMLKIGVVLLGLFYLL). Residues 464–509 (HDNSLFKGFKGEKKSKVSTRSSMSPSSILFRKTVFEKYCLLDHSTS) are Lumenal-facing. A helical transmembrane segment spans residues 510–530 (TISLFFGLLIFTLKSAYGYLT). At 531 to 900 (HRLSALYTSS…QEDLGYVSSA (370 aa)) the chain is on the cytoplasmic side. A phosphoserine mark is found at Ser-898 and Ser-899.

In terms of assembly, forms a tight complex with scp1, composed of 4 copies of scp1 and 4 copies of sre1, which protects sre1 precursor from degradation by the proteasome. In low oxygen or sterol conditions, undergoes proteolytic cleavage by rhomboid-type protease rbd2 and is released as soluble transcription factor from the membrane. In terms of processing, processed form is phosphorylated.

It localises to the endoplasmic reticulum membrane. Its subcellular location is the nucleus. Functionally, precursor of the transcription factor form (Processed sterol regulatory element-binding protein 1), which is embedded in the endoplasmic reticulum membrane. Low oxygen or sterol conditions promote processing of this form, releasing the transcription factor form that translocates into the nucleus and activates transcription of genes required for adaptation to anaerobic growth. Its function is as follows. Transcriptional activator required for transcription of genes required for adaptation to anaerobic growth like those implicated in the nonrespiratory oxygen-consumptive biosynthetic pathways of sterol, heme, sphingolipid, and ubiquinone biosynthesis. May monitor oxygen levels through sterol synthesis steps which require oxygen. In Schizosaccharomyces pombe (strain 972 / ATCC 24843) (Fission yeast), this protein is Sterol regulatory element-binding protein 1.